Reading from the N-terminus, the 448-residue chain is Probable glycine dehydrogenase (decarboxylating) subunit 1 (448 aa).

The protein belongs to the GcvP family. N-terminal subunit subfamily. The glycine cleavage system is composed of four proteins: P, T, L and H. In this organism, the P 'protein' is a heterodimer of two subunits.

The catalysed reaction is N(6)-[(R)-lipoyl]-L-lysyl-[glycine-cleavage complex H protein] + glycine + H(+) = N(6)-[(R)-S(8)-aminomethyldihydrolipoyl]-L-lysyl-[glycine-cleavage complex H protein] + CO2. In terms of biological role, the glycine cleavage system catalyzes the degradation of glycine. The P protein binds the alpha-amino group of glycine through its pyridoxal phosphate cofactor; CO(2) is released and the remaining methylamine moiety is then transferred to the lipoamide cofactor of the H protein. In Bacillus licheniformis (strain ATCC 14580 / DSM 13 / JCM 2505 / CCUG 7422 / NBRC 12200 / NCIMB 9375 / NCTC 10341 / NRRL NRS-1264 / Gibson 46), this protein is Probable glycine dehydrogenase (decarboxylating) subunit 1.